A 108-amino-acid polypeptide reads, in one-letter code: V-type proton ATPase subunit G (108 aa).

Basic and acidic residues predominate over residues 48–60 (YASKKEEEFKKSE). The tract at residues 48-89 (YASKKEEEFKKSESQASGIYSQAEAESKKQVQDTFASIETSS) is disordered. Positions 79-89 (QDTFASIETSS) are enriched in polar residues.

It belongs to the V-ATPase G subunit family. As to quaternary structure, V-ATPase is a heteromultimeric enzyme composed of a peripheral catalytic V1 complex (components A to H) attached to an integral membrane V0 proton pore complex (components: a, c, c', c'', d, e, f and VOA1).

Its subcellular location is the vacuole membrane. Subunit of the V1 complex of vacuolar(H+)-ATPase (V-ATPase), a multisubunit enzyme composed of a peripheral complex (V1) that hydrolyzes ATP and a membrane integral complex (V0) that translocates protons. V-ATPase is responsible for acidifying and maintaining the pH of intracellular compartments. The protein is V-type proton ATPase subunit G (vma10) of Schizosaccharomyces pombe (strain 972 / ATCC 24843) (Fission yeast).